Reading from the N-terminus, the 486-residue chain is MNGAKRRKVAQDTPRNTKPVAQEKPARAEPKPSSDEESEEESATLEEPSAEETAVDAPKKTFKDLGVNDALCEACEKLNYKYPTPIQEKSIPVALQGRDIIGLAETGSGKTAAFALPVLQALLDKPQPLFGLVLAPTRELATQIGQAFEALGSLISLRCAVIVGGLDMVPQAIALGKKPHIVVATPGRLVDHLEKTKGFSLRTLKYLIMDEADRLLDMDFGPSIDKILKFVPRERRTYLFSATISSKIESLQRASLRDPVKVSISSNKYQTVSTLLQNYLFIPHPQKDVHLIYLINEHAGQSTIVFTRTVWETQRVSILLRTLGFGAIPLHGQLSQSSRLGALNKFRSGTRDILVATDVAARGLDIPSVDVVLNYDLPQDSKTYIHRVGRTARAGKSGVAISLVTQYDLEIYLRIEAALGKKLAEYPTEKEEVMAFQSRVEEAQRIARIEMKSFTEERGKKGSTLKGGRGKKGGKRGRDDMDREEG.

Positions 1–58 are disordered; the sequence is MNGAKRRKVAQDTPRNTKPVAQEKPARAEPKPSSDEESEEESATLEEPSAEETAVDAP. The span at 24–34 shows a compositional bias: basic and acidic residues; that stretch reads KPARAEPKPSS. Acidic residues predominate over residues 35-54; the sequence is DEESEEESATLEEPSAEETA. The Q motif motif lies at 60–88; the sequence is KTFKDLGVNDALCEACEKLNYKYPTPIQE. A Helicase ATP-binding domain is found at 91-262; the sequence is IPVALQGRDI…RASLRDPVKV (172 aa). Residue 104 to 111 participates in ATP binding; the sequence is AETGSGKT. Positions 210-213 match the DEAD box motif; that stretch reads DEAD. The 149-residue stretch at 286–434 folds into the Helicase C-terminal domain; the sequence is QKDVHLIYLI…EYPTEKEEVM (149 aa). 2 stretches are compositionally biased toward basic and acidic residues: residues 451–460 and 476–486; these read MKSFTEERGK and RGRDDMDREEG. The disordered stretch occupies residues 451-486; it reads MKSFTEERGKKGSTLKGGRGKKGGKRGRDDMDREEG.

Belongs to the DEAD box helicase family. DDX47/RRP3 subfamily. As to quaternary structure, interacts with the SSU processome.

The protein localises to the nucleus. It catalyses the reaction ATP + H2O = ADP + phosphate + H(+). Functionally, ATP-dependent rRNA helicase required for pre-ribosomal RNA processing. Involved in the maturation of the 35S-pre-rRNA and to its cleavage to mature 18S rRNA. This chain is ATP-dependent rRNA helicase RRP3, found in Gibberella zeae (strain ATCC MYA-4620 / CBS 123657 / FGSC 9075 / NRRL 31084 / PH-1) (Wheat head blight fungus).